The following is a 153-amino-acid chain: Ribonuclease P protein component (153 aa).

It belongs to the RnpA family. Consists of a catalytic RNA component (M1 or rnpB) and a protein subunit.

It carries out the reaction Endonucleolytic cleavage of RNA, removing 5'-extranucleotides from tRNA precursor.. Functionally, RNaseP catalyzes the removal of the 5'-leader sequence from pre-tRNA to produce the mature 5'-terminus. It can also cleave other RNA substrates such as 4.5S RNA. The protein component plays an auxiliary but essential role in vivo by binding to the 5'-leader sequence and broadening the substrate specificity of the ribozyme. This Helicobacter acinonychis (strain Sheeba) protein is Ribonuclease P protein component.